Reading from the N-terminus, the 91-residue chain is UPF0213 protein NMC1807 (91 aa).

Residues 4 to 83 form the GIY-YIG domain; it reads SNWSVYLILC…AAQKRQLWEQ (80 aa).

Belongs to the UPF0213 family.

This is UPF0213 protein NMC1807 from Neisseria meningitidis serogroup C / serotype 2a (strain ATCC 700532 / DSM 15464 / FAM18).